The primary structure comprises 505 residues: 2,3-bisphosphoglycerate-independent phosphoglycerate mutase (505 aa).

Mn(2+) is bound by residues D13 and S63. S63 serves as the catalytic Phosphoserine intermediate. Substrate-binding positions include H124, R153 to D154, R183, R189, R254 to R257, and K330. Mn(2+)-binding residues include D396, H400, D437, H438, and H456.

Belongs to the BPG-independent phosphoglycerate mutase family. In terms of assembly, monomer. Mn(2+) serves as cofactor.

It catalyses the reaction (2R)-2-phosphoglycerate = (2R)-3-phosphoglycerate. Its pathway is carbohydrate degradation; glycolysis; pyruvate from D-glyceraldehyde 3-phosphate: step 3/5. In terms of biological role, catalyzes the interconversion of 2-phosphoglycerate and 3-phosphoglycerate. This chain is 2,3-bisphosphoglycerate-independent phosphoglycerate mutase, found in Ruegeria pomeroyi (strain ATCC 700808 / DSM 15171 / DSS-3) (Silicibacter pomeroyi).